The sequence spans 248 residues: Cyclin-Q (248 aa).

Met1 is subject to N-acetylmethionine. Positions Met1 to Ala12 are enriched in gly residues. A disordered region spans residues Met1–Ala21.

It belongs to the cyclin family. Cyclin-like FAM58 subfamily. As to quaternary structure, associates with CDK10 to promote its kinase activity. Interacts with SALL1.

Activating cyclin for the cyclin-associated kinase CDK10. The chain is Cyclin-Q from Homo sapiens (Human).